Consider the following 299-residue polypeptide: tRNA dimethylallyltransferase (299 aa).

Gly13–Thr20 is a binding site for ATP. Thr15–Thr20 contacts substrate. The interaction with substrate tRNA stretch occupies residues Asp38 to Gln41.

This sequence belongs to the IPP transferase family. In terms of assembly, monomer. Mg(2+) serves as cofactor.

It catalyses the reaction adenosine(37) in tRNA + dimethylallyl diphosphate = N(6)-dimethylallyladenosine(37) in tRNA + diphosphate. Its function is as follows. Catalyzes the transfer of a dimethylallyl group onto the adenine at position 37 in tRNAs that read codons beginning with uridine, leading to the formation of N6-(dimethylallyl)adenosine (i(6)A). The protein is tRNA dimethylallyltransferase of Prochlorococcus marinus subsp. pastoris (strain CCMP1986 / NIES-2087 / MED4).